The following is a 198-amino-acid chain: LIM domain-containing protein D (198 aa).

In terms of domain architecture, LIM zinc-binding spans 5–65 (GKCTRCQKTV…ANHYPVGGLS (61 aa)).

It is found in the cell projection. Its subcellular location is the pseudopodium. The protein resides in the cytoplasm. It localises to the cell cortex. The protein localises to the cytoskeleton. Its function is as follows. Binds to F-actin and may modulate the chemotactic response during early development and contribute to the maintenance of the strength of the actin cytoskeleton. This is LIM domain-containing protein D (limD) from Dictyostelium discoideum (Social amoeba).